A 324-amino-acid polypeptide reads, in one-letter code: Beta-ketoacyl-[acyl-carrier-protein] synthase III (324 aa).

Residues Cys112 and His249 contribute to the active site. The interval Gln250–Arg254 is ACP-binding. The active site involves Asn279.

It belongs to the thiolase-like superfamily. FabH family. Homodimer.

It localises to the cytoplasm. The catalysed reaction is malonyl-[ACP] + acetyl-CoA + H(+) = 3-oxobutanoyl-[ACP] + CO2 + CoA. Its pathway is lipid metabolism; fatty acid biosynthesis. Its function is as follows. Catalyzes the condensation reaction of fatty acid synthesis by the addition to an acyl acceptor of two carbons from malonyl-ACP. Catalyzes the first condensation reaction which initiates fatty acid synthesis and may therefore play a role in governing the total rate of fatty acid production. Possesses both acetoacetyl-ACP synthase and acetyl transacylase activities. Its substrate specificity determines the biosynthesis of branched-chain and/or straight-chain of fatty acids. The chain is Beta-ketoacyl-[acyl-carrier-protein] synthase III from Streptococcus pyogenes serotype M1.